The chain runs to 447 residues: Exodeoxyribonuclease 7 large subunit (447 aa).

The protein belongs to the XseA family. Heterooligomer composed of large and small subunits.

The protein resides in the cytoplasm. It carries out the reaction Exonucleolytic cleavage in either 5'- to 3'- or 3'- to 5'-direction to yield nucleoside 5'-phosphates.. In terms of biological role, bidirectionally degrades single-stranded DNA into large acid-insoluble oligonucleotides, which are then degraded further into small acid-soluble oligonucleotides. The chain is Exodeoxyribonuclease 7 large subunit from Exiguobacterium sibiricum (strain DSM 17290 / CCUG 55495 / CIP 109462 / JCM 13490 / 255-15).